A 303-amino-acid chain; its full sequence is Protoheme IX farnesyltransferase 2 (303 aa).

The next 9 helical transmembrane spans lie at 29-49 (VVAL…PGIV), 51-71 (LQPL…AAAF), 96-118 (ISTT…VLYT), 123-143 (LTAW…TAYL), 150-170 (NIVI…TAIT), 177-197 (ALLL…ALAI), 223-243 (CILL…LVGM), 244-264 (CGPI…YKAW), and 281-301 (FSIY…YFWV).

The protein belongs to the UbiA prenyltransferase family. Protoheme IX farnesyltransferase subfamily.

Its subcellular location is the cell inner membrane. It catalyses the reaction heme b + (2E,6E)-farnesyl diphosphate + H2O = Fe(II)-heme o + diphosphate. The protein operates within porphyrin-containing compound metabolism; heme O biosynthesis; heme O from protoheme: step 1/1. Its function is as follows. Converts heme B (protoheme IX) to heme O by substitution of the vinyl group on carbon 2 of heme B porphyrin ring with a hydroxyethyl farnesyl side group. The chain is Protoheme IX farnesyltransferase 2 from Shewanella frigidimarina (strain NCIMB 400).